The chain runs to 532 residues: Probable alpha-galactosidase A (532 aa).

An N-terminal signal peptide occupies residues 1–21 (MDTTKSLLSTLIAIMIPLSLG). Cys44 and Cys76 are disulfide-bonded. N-linked (GlcNAc...) asparagine glycans are attached at residues Asn47, Asn91, and Asn121. A disulfide bridge connects residues Cys124 and Cys154. Asp152 functions as the Nucleophile in the catalytic mechanism. The N-linked (GlcNAc...) asparagine glycan is linked to Asn201. Asp210 acts as the Proton donor in catalysis. Residues 410-531 (CSTVIPTGIV…GLPSGVDIKP (122 aa)) form the Ricin B-type lectin domain. 2 disulfide bridges follow: Cys427–Cys441 and Cys466–Cys478.

The protein belongs to the glycosyl hydrolase 27 family.

It is found in the secreted. The catalysed reaction is Hydrolysis of terminal, non-reducing alpha-D-galactose residues in alpha-D-galactosides, including galactose oligosaccharides, galactomannans and galactolipids.. Functionally, hydrolyzes a variety of simple alpha-D-galactoside as well as more complex molecules such as oligosaccharides and polysaccharides. In Aspergillus fumigatus (strain ATCC MYA-4609 / CBS 101355 / FGSC A1100 / Af293) (Neosartorya fumigata), this protein is Probable alpha-galactosidase A (aglA).